A 54-amino-acid chain; its full sequence is MTNGKIWLVVKPTVGVPLFLSAAVIASVVIHAAVLTTTTWLPAYYQGSAAVAAE.

At 1-14 the chain is on the cytoplasmic side; it reads MTNGKIWLVVKPTV. The chain crosses the membrane as a helical span at residues 15–35; that stretch reads GVPLFLSAAVIASVVIHAAVL. His-31 contacts a bacteriochlorophyll. Residues 36–54 are Periplasmic-facing; sequence TTTTWLPAYYQGSAAVAAE.

It belongs to the antenna complex alpha subunit family. The core complex is formed by different alpha and beta chains, binding bacteriochlorophyll molecules, and arranged most probably in tetrameric structures disposed around the reaction center. The non-pigmented gamma chains may constitute additional components.

It localises to the cell inner membrane. Its function is as follows. Antenna complexes are light-harvesting systems, which transfer the excitation energy to the reaction centers. In Cereibacter sphaeroides (Rhodobacter sphaeroides), this protein is Light-harvesting protein B-800/850 alpha chain (pucA).